A 483-amino-acid chain; its full sequence is Glutamyl-tRNA(Gln) amidotransferase subunit A (483 aa).

Catalysis depends on charge relay system residues Lys-75 and Ser-150. Ser-174 (acyl-ester intermediate) is an active-site residue.

Belongs to the amidase family. GatA subfamily. In terms of assembly, heterotrimer of A, B and C subunits.

It catalyses the reaction L-glutamyl-tRNA(Gln) + L-glutamine + ATP + H2O = L-glutaminyl-tRNA(Gln) + L-glutamate + ADP + phosphate + H(+). In terms of biological role, allows the formation of correctly charged Gln-tRNA(Gln) through the transamidation of misacylated Glu-tRNA(Gln) in organisms which lack glutaminyl-tRNA synthetase. The reaction takes place in the presence of glutamine and ATP through an activated gamma-phospho-Glu-tRNA(Gln). The polypeptide is Glutamyl-tRNA(Gln) amidotransferase subunit A (Legionella pneumophila (strain Corby)).